The following is a 39-amino-acid chain: Potassium channel toxin alpha-KTx 2.1 (39 aa).

Cystine bridges form between C7–C29, C13–C34, and C17–C36. The segment at 26 to 34 (GAKCMNGKC) is interaction with Ca(2+)-activated K(+) channels. N39 carries the asparagine amide modification.

Belongs to the short scorpion toxin superfamily. Potassium channel inhibitor family. Alpha-KTx 02 subfamily. As to expression, expressed by the venom gland.

It localises to the secreted. Its function is as follows. Blocks voltage-gated potassium channels (mKv1.1/KCNA1 (Kd&gt;25 nM), rKv1.2/KCNA2 (Kd=2 nM), mKv1.3/KCNA3 (Kd=1 nM), hKv1.5/KCNA5 (Kd&gt;25 nM) and mKv3.1/KCNC1 (Kd&gt;25 nM)) and calcium-activated potassium channels (KCa1.1/KCNMA1 and KCa3.1/KCNN4, Kd&gt;25 nM). The chain is Potassium channel toxin alpha-KTx 2.1 from Centruroides noxius (Mexican scorpion).